A 708-amino-acid chain; its full sequence is Lactotransferrin (708 aa).

The N-terminal stretch at M1–A19 is a signal peptide. Transferrin-like domains are found at residues V25–E352 and V364–Q693. Cystine bridges form between C28/C64 and C38/C55. A Fe(3+)-binding site is contributed by D79. R92 is an active-site residue. Position 111 (Y111) interacts with Fe(3+). Cystine bridges form between C134-C217, C176-C192, C179-C202, C189-C200, and C250-C264. Hydrogencarbonate is bound at residue T136. N139 is a glycosylation site (N-linked (GlcNAc...) asparagine). Positions 140, 142, and 143 each coordinate hydrogencarbonate. Y211 is a binding site for Fe(3+). A Fe(3+)-binding site is contributed by H272. The Nucleophile role is filled by S278. 2 disulfide bridges follow: C367–C399 and C377–C390. A glycan (N-linked (GlcNAc...) asparagine) is linked at N385. D414 and D452 together coordinate Fe(3+). Cystine bridges form between C476-C551, C510-C524, C521-C534, and C592-C606. The hydrogencarbonate site is built by T478, R482, A484, and G485. The N-linked (GlcNAc...) asparagine glycan is linked to N495. Fe(3+) is bound at residue Y545. H614 is a Fe(3+) binding site.

Belongs to the transferrin family. As to quaternary structure, monomer. Found in a complex with LTF, CLU, EPPIN and SEMG1. Interacts with prey activated coagulation factor X; the interaction inhibits coagulation factor X catalytic activity. Found in a complex with MPO and LTF; interacts directly with CP, allows Fe(3+) incorporation into LTF and activation of CP ferroxidase activity. N-glycosylated. Glycosylation is important for draculin anticoagulant activity. Probably also O-glycosylated. As to expression, expressed in the submaxillary gland and secreted in the saliva (at protein level).

The protein resides in the secreted. Transferrins are iron binding transport proteins which can bind two Fe(3+) ions in association with the binding of an anion, usually bicarbonate. Its function is as follows. Major iron-binding and multifunctional protein found in exocrine fluids such as breast milk and mucosal secretions. Has antimicrobial activity. Antimicrobial properties may include bacteriostasis, which is related to its ability to sequester free iron and thus inhibit microbial growth, as well as direct bactericidal properties leading to the release of lipopolysaccharides from the bacterial outer membrane. May have anabolic, differentiating and anti-apoptotic effects on osteoblasts and may also inhibit osteoclastogenesis, possibly playing a role in the regulation of bone growth. May interfere with the lipopolysaccharide (LPS)-stimulated TLR4 signaling. In terms of biological role, the lactotransferrin transferrin-like domain 1 functions as a serine protease of the peptidase S60 family that cuts arginine rich regions. This function contributes to the antimicrobial activity. Shows a preferential cleavage at -Arg-Ser-Arg-Arg-|- and -Arg-Arg-Ser-Arg-|-, and of Z-Phe-Arg-|-aminomethylcoumarin sites. Functionally, acts as an anticoagulant of the blood coagulation cascade of the bat's prey by inhibiting coagulation factor IX and activated coagulation factor X. This chain is Lactotransferrin, found in Desmodus rotundus (Vampire bat).